The chain runs to 157 residues: CAPA peptides (157 aa).

Positions 1-21 (MQPTMRIIVSMALLAYAVASA) are cleaved as a signal peptide. Positions 22 to 28 (YHSNVKL) are excised as a propeptide. Valine amide is present on Val42. Residues 45-66 (ASGNTWQLPLNDLYPEYEPAQV) constitute a propeptide that is removed on maturation. Gln69 is modified (pyrrolidone carboxylic acid; partial). The residue at position 76 (Val76) is a Valine amide. Leu85 and Leu117 each carry leucine amide. Positions 120–157 (AFKNDDDEITIQNESNDHSEPEQTELIHEDRRKRQTLN) are excised as a propeptide. The segment at 131-157 (QNESNDHSEPEQTELIHEDRRKRQTLN) is disordered. Positions 134 to 151 (SNDHSEPEQTELIHEDRR) are enriched in basic and acidic residues.

Belongs to the pyrokinin family. In terms of tissue distribution, CAPA-periviscerokinin 1: Expressed in corpora cardiaca (CC), corpora allata (CA), antennal lobe (AL) and gnathal ganglion (GNG) (at protein level). Expression detected in most animals in CC and CA and in some animals in AL and GNG (at protein level). CAPA-periviscerokinin 2: Expressed in corpora cardiaca (CC), corpora allata (CA), antennal lobe (AL) and gnathal ganglion (GNG) (at protein level). For non-pyroglutamate form, expression in AL detected in all animals, in CC, CA and GNG in most animals (at protein level). For pyroglutamate form, expression in CC and CA detected in most animals, in AL and GNG in some animals (at protein level). CAPA-periviscerokinin 3: Expressed in corpora cardiaca (CC), corpora allata (CA), antennal lobe (AL) and gnathal ganglion (GNG). Expression detected in most animals in CC and CA and in some animals in AL and GNG (at protein level). CAPA-precursor-related peptide 3: Expressed in corpora cardiaca (CC), corpora allata (CA), antennal lobe (AL) and gnathal ganglion (GNG) (at protein level). Expression in CC and CA detected in some animals, expression in Al and GNG detected in few animals (at protein level). CAPA-trypto-pyrokinin: Expressed in corpora cardiaca (CC), corpora allata (CA), antennal lobe (AL) and gnathal ganglion (GNG) (at protein level). Expression in CC, CA and GNG detected in most animals, in AL in some animals (at protein level).

It localises to the secreted. Myoactive. The protein is CAPA peptides of Agrotis ipsilon (Black cutworm moth).